Reading from the N-terminus, the 74-residue chain is DUP240 protein DFP2 (74 aa).

Belongs to the DUP/COS family.

It localises to the cytoplasm. The protein localises to the membrane. The sequence is that of DUP240 protein DFP2 from Saccharomyces cerevisiae (strain ATCC 204508 / S288c) (Baker's yeast).